The chain runs to 159 residues: MRPTPLSTILALTMAATAPAMAASLKDVAPYPEAEKGFTRQVIHLPAQADEQAYKLEILAGKTLQVDCNRQRLAGSLEEHTLEGWGYNYYRLDKVGGPASTLMACPDGKKTEAFVPVVGEGFLLRYNSKLPVVVYVPDGVQVRYRVWSASQDVQKAKVE.

An N-terminal signal peptide occupies residues 1–22 (MRPTPLSTILALTMAATAPAMA). C68 and C105 are oxidised to a cystine.

This sequence belongs to the protease inhibitor I11 (ecotin) family. As to quaternary structure, homodimer.

The protein localises to the periplasm. In terms of biological role, general inhibitor of family S1 serine proteases. This chain is Ecotin, found in Pseudomonas putida (strain W619).